The primary structure comprises 243 residues: Homeobox protein nob-1 (243 aa).

The span at 1–12 (MISVMQQMINND) shows a compositional bias: polar residues. 2 disordered regions span residues 1 to 23 (MISV…SITS) and 40 to 67 (SIQG…TGMV). Residues 162-221 (GKKKRQPYKKDQISRLEYEYSVNQYLTNKRRSELSAQLMLDEKQVKVWFQNRRMKDKKLR) constitute a DNA-binding region (homeobox).

The protein belongs to the abd-b homeobox family. In terms of assembly, interacts with nuclear receptor nhr-25. Interacts with geminin homolog gmn-1. Interacts with homeodomain protein ceh-20.

It is found in the nucleus. In terms of biological role, transcription factor, involved in posterior embryonic patterning, morphogenetic movements of the posterior hypodermis, and cell fate specification. Binds to the 5'-TAGT-3' motif in regulatory elements of genes, including Meis protein psa-3 and microRNA mir-57. Involved in a negative regulatory loop with mir-57 to specify posterior cell identities. Required for asymmetric division of the T hypodermal cell, acting via the regulation of asymmetric expression of psa-3 in cooperation with ceh-20 and the Wnt-MAPK pathway. Involved in the regulation of the onset of non-apoptotic cell death in the linker cell, acting together with the Wnt signaling pathway. Involved in promoting embryogenesis, in concert with orphan nuclear receptor nhr-25. May regulate expression of transcription factor dmd-3. The sequence is that of Homeobox protein nob-1 from Caenorhabditis elegans.